Here is a 43-residue protein sequence, read N- to C-terminus: Protein PsbN (43 aa).

The chain crosses the membrane as a helical span at residues 7–27 (LVVAIAAITICITAFAIYTAF).

Belongs to the PsbN family.

The protein localises to the cellular thylakoid membrane. In terms of biological role, may play a role in photosystem I and II biogenesis. The sequence is that of Protein PsbN from Synechococcus sp. (strain JA-3-3Ab) (Cyanobacteria bacterium Yellowstone A-Prime).